Consider the following 99-residue polypeptide: Putative membrane protein insertion efficiency factor (99 aa).

It belongs to the UPF0161 family.

It localises to the cell membrane. Functionally, could be involved in insertion of integral membrane proteins into the membrane. This Levilactobacillus brevis (strain ATCC 367 / BCRC 12310 / CIP 105137 / JCM 1170 / LMG 11437 / NCIMB 947 / NCTC 947) (Lactobacillus brevis) protein is Putative membrane protein insertion efficiency factor.